The following is a 251-amino-acid chain: Probable transcriptional regulatory protein MSMEG_2940/MSMEI_2866 (251 aa).

It belongs to the TACO1 family.

The protein localises to the cytoplasm. The polypeptide is Probable transcriptional regulatory protein MSMEG_2940/MSMEI_2866 (Mycolicibacterium smegmatis (strain ATCC 700084 / mc(2)155) (Mycobacterium smegmatis)).